A 394-amino-acid chain; its full sequence is uncharacterized protein (394 aa).

11 helical membrane-spanning segments follow: residues 10–30 (PALI…NYYA), 50–70 (FIVT…VPLG), 79–99 (IVSM…SQSL), 100–120 (AMMI…QILV), 138–158 (TIMS…GLLA), 166–186 (VFWV…RGLP), 218–238 (LLGC…AFLL), 243–263 (FNYS…GALG), 291–311 (WLAI…ILVL), 337–357 (LTAG…LISA), and 364–384 (GWAG…LVWW).

It belongs to the major facilitator superfamily.

It is found in the cell inner membrane. This is an uncharacterized protein from Escherichia coli (strain K12).